The primary structure comprises 199 residues: 7-methyl-GTP pyrophosphatase (199 aa).

Catalysis depends on Asp74, which acts as the Proton acceptor.

This sequence belongs to the Maf family. YceF subfamily. It depends on a divalent metal cation as a cofactor.

The protein resides in the cytoplasm. The catalysed reaction is N(7)-methyl-GTP + H2O = N(7)-methyl-GMP + diphosphate + H(+). In terms of biological role, nucleoside triphosphate pyrophosphatase that hydrolyzes 7-methyl-GTP (m(7)GTP). May have a dual role in cell division arrest and in preventing the incorporation of modified nucleotides into cellular nucleic acids. The polypeptide is 7-methyl-GTP pyrophosphatase (Cupriavidus metallidurans (strain ATCC 43123 / DSM 2839 / NBRC 102507 / CH34) (Ralstonia metallidurans)).